Reading from the N-terminus, the 470-residue chain is Argininosuccinate lyase (470 aa).

The protein belongs to the lyase 1 family. Argininosuccinate lyase subfamily.

The protein resides in the cytoplasm. It carries out the reaction 2-(N(omega)-L-arginino)succinate = fumarate + L-arginine. It participates in amino-acid biosynthesis; L-arginine biosynthesis; L-arginine from L-ornithine and carbamoyl phosphate: step 3/3. The chain is Argininosuccinate lyase from Mycobacterium sp. (strain JLS).